Consider the following 304-residue polypeptide: UDP-N-acetylenolpyruvoylglucosamine reductase (304 aa).

Residues 33–198 (RVGGPADILV…IEATIELESG (166 aa)) enclose the FAD-binding PCMH-type domain. The active site involves Arg-177. Ser-227 (proton donor) is an active-site residue. Residue Glu-297 is part of the active site.

The protein belongs to the MurB family. FAD serves as cofactor.

Its subcellular location is the cytoplasm. It carries out the reaction UDP-N-acetyl-alpha-D-muramate + NADP(+) = UDP-N-acetyl-3-O-(1-carboxyvinyl)-alpha-D-glucosamine + NADPH + H(+). It functions in the pathway cell wall biogenesis; peptidoglycan biosynthesis. In terms of biological role, cell wall formation. This is UDP-N-acetylenolpyruvoylglucosamine reductase from Clostridium perfringens (strain SM101 / Type A).